A 240-amino-acid polypeptide reads, in one-letter code: Protein Thf1 (240 aa).

Residues 186-222 are a coiled coil; sequence KDLDLYRSNLEKVDQLLKVLEDAAEAERKKKEKQAAS. The tract at residues 212–240 is disordered; it reads ERKKKEKQAASTTPAIEEAPVTTAESSES.

The protein belongs to the THF1 family.

May be involved in photosynthetic membrane biogenesis. The chain is Protein Thf1 from Synechocystis sp. (strain ATCC 27184 / PCC 6803 / Kazusa).